Here is a 300-residue protein sequence, read N- to C-terminus: D-alanine--D-alanine ligase (300 aa).

An ATP-grasp domain is found at 99–293 (KKILKYANIN…FAELLNSIVK (195 aa)). Residue 126 to 181 (IEKIGYPVFVKPNSGGSSVATNLVKDKEGIKEAVELALKYDKEVMIENYTKGEEIT) participates in ATP binding. Residues aspartate 248, glutamate 260, and asparagine 262 each contribute to the Mg(2+) site.

The protein belongs to the D-alanine--D-alanine ligase family. It depends on Mg(2+) as a cofactor. Mn(2+) serves as cofactor.

The protein localises to the cytoplasm. It catalyses the reaction 2 D-alanine + ATP = D-alanyl-D-alanine + ADP + phosphate + H(+). It functions in the pathway cell wall biogenesis; peptidoglycan biosynthesis. Cell wall formation. The protein is D-alanine--D-alanine ligase of Clostridium botulinum (strain Okra / Type B1).